The following is a 4576-amino-acid chain: Mucin-2 (4576 aa).

The signal sequence occupies residues Met1–Gly20. Ser21 bears the Phosphoserine mark. The VWFD 1 domain occupies His32–Glu205. 29 disulfides stabilise this stretch: Cys34–Cys166, Cys56–Cys204, Cys64–Cys163, Cys216–Cys253, Cys223–Cys248, Cys235–Cys273, Cys255–Cys261, Cys263–Cys289, Cys293–Cys327, Cys306–Cys319, Cys310–Cys349, Cys329–Cys343, Cys351–Cys373, Cys368–Cys385, Cys371–Cys380, Cys389–Cys526, Cys411–Cys561, Cys433–Cys441, Cys572–Cys617, Cys586–Cys612, Cys599–Cys637, Cys619–Cys625, Cys627–Cys652, Cys659–Cys696, Cys672–Cys686, Cys676–Cys716, Cys698–Cys710, Cys718–Cys740, and Cys738–Cys747. Residue Asp46 coordinates Ca(2+). Positions 143 and 151 each coordinate Cu(+). Glu153 serves as a coordination point for Cu(2+). The N-linked (GlcNAc...) asparagine glycan is linked to Asn160. The Ca(2+) site is built by Asp168, Asn170, and Glu177. Cu(2+) is bound at residue His275. One can recognise a TIL domain in the interval Cys293–Cys349. Residue His322 coordinates Cu(2+). Met324 is a Cu(+) binding site. The region spanning Glu387–His562 is the VWFD 2 domain. Residue Asp401 coordinates Ca(2+). Asn421 carries an N-linked (GlcNAc...) asparagine glycan. Ca(2+) is bound by residues Asn528, Asn530, Leu532, Asp535, and Asp536. A glycan (N-linked (GlcNAc...) asparagine) is linked at Asn668. N-linked (GlcNAc...) asparagine glycosylation is present at Asn768. Intrachain disulfides connect Cys782–Cys818, Cys800–Cys812, Cys820–Cys843, Cys837–Cys855, Cys841–Cys850, Cys859–Cys990, Cys881–Cys1025, Cys890–Cys987, Cys907–Cys914, Cys1035–Cys1078, Cys1049–Cys1073, Cys1060–Cys1100, Cys1080–Cys1088, Cys1090–Cys1115, Cys1106–Cys1135, Cys1119–Cys1161, Cys1143–Cys1185, Cys1165–Cys1179, Cys1187–Cys1211, Cys1206–Cys1236, and Cys1209–Cys1219. The N-linked (GlcNAc...) asparagine glycan is linked to Asn838. In terms of domain architecture, VWFD 3 spans Ser857–Pro1026. Residue Asp871 coordinates Ca(2+). N-linked (GlcNAc...) asparagine glycosylation is present at Asn893. Ca(2+)-binding residues include Asn992, Asp994, Asn999, and Asp1000. Residues Asn1137 and Asn1152 are each glycosylated (N-linked (GlcNAc...) asparagine). N-linked (GlcNAc...) asparagine glycans are attached at residues Asn1213, Asn1228, and Asn1244. O-linked (GalNAc) threonine glycans are attached at residues Thr1265, Thr1268, Thr1269, Thr1281, and Thr1292. The Ca(2+) site is built by Asn1305, His1308, Gly1315, Asp1316, and Glu1318. A glycan (N-linked (GlcNAc...) asparagine) is linked at Asn1352. Residues Asp1375 and Tyr1376 each contribute to the Ca(2+) site. Repeat copies occupy residues Ser1395–Leu1415, Pro1416–Leu1427, Pro1428–Ile1437, Ser1438–Thr1453, and Ser1454–Thr1460. The segment at Ser1395 to Pro2866 is disordered. One copy of the 7B repeat lies at Pro1478–Thr1497. The 8A repeat unit spans residues Pro1498–Ser1510. The stretch at Ser1530–Thr1556 is one 9B repeat. One copy of the 10A repeat lies at Pro1557–Ile1572. The 10B repeat unit spans residues Pro1573–Ile1588. The 11A repeat unit spans residues Ser1589–Thr1607. Residues Pro1608 to Thr1634 form an 11B repeat. 2 repeat units span residues Pro1635–Thr1642 and Ile1665–Thr1681. 2 N-linked (GlcNAc...) asparagine glycosylation sites follow: Asn2529 and Asn2910. 2 stretches are compositionally biased toward low complexity: residues Pro2975–Pro3623 and Pro3631–Ser3706. Residues Pro2975 to Ser3706 are disordered. 3 N-linked (GlcNAc...) asparagine glycosylation sites follow: Asn3734, Asn3745, and Asn3756. Positions Ser3764–Thr3774 are enriched in pro residues. The tract at residues Ser3764 to Thr3806 is disordered. Residues Pro3775–Thr3806 show a composition bias toward low complexity. Asn3823, Asn3830, and Asn3903 each carry an N-linked (GlcNAc...) asparagine glycan. The region spanning Cys3880–Pro4063 is the VWFD 4 domain. Cystine bridges form between Cys3882-Cys4023, Cys3904-Cys4062, and Cys3928-Cys3936. Asn3991, Asn4017, Asn4028, Asn4083, Asn4149, Asn4183, Asn4254, Asn4277, Asn4351, Asn4366, Asn4434, Asn4465, and Asn4488 each carry an N-linked (GlcNAc...) asparagine glycan. 2 VWFC domains span residues Cys4213–Lys4282 and Gly4320–Gln4387. Cystine bridges form between Cys4471–Cys4518, Cys4485–Cys4532, Cys4494–Cys4548, and Cys4498–Cys4550. Residues Cys4471–Gly4556 enclose the CTCK domain.

Homomultimer; disulfide-linked. The N- and C-terminus mediate their assembly into higher order structures to form filaments. The CTCK domains of two polypeptides associate in the endoplasmic reticulum to generate intermolecularly disulfide-bonded dimers. These dimers progress to the Golgi apparatus, which is a more acidic environment than the endoplasmic reticulum. Under acidic conditions, the N-termini form non-covalent intermolecular interactions that juxtapose assemblies of the third VWD domain (VWD3) from different CTCK-linked dimers. The VWD3 assemblies then become disulfide bonded to one another to produce long, disulfide-linked polymers that remain highly compact until secretion. Interacts with FCGBP. Interacts with AGR2; disulfide-linked. O-glycosylated. O-glycosylation is required for mucin assembly. Goblet cells synthesize two forms of mucin that differ in branched chain O-glycosylation and the site of production in the colon. Post-translationally, may undergo proteolytic cleavage in the outer mucus layer of the colon, contributing to the expanded volume and loose nature of this layer which allows for bacterial colonization in contrast to the inner mucus layer which is dense and devoid of bacteria. In terms of processing, at low pH of 6 and under, undergoes autocatalytic cleavage in vitro in the N-terminal region of the fourth VWD domain. It is likely that this also occurs in vivo and is triggered by the low pH of the late secretory pathway. Highly expressed in goblet cells of the colon with lower levels in the small intestine and no expression in the stomach (at protein level).

It localises to the secreted. Coats the epithelia of the intestines and other mucus membrane-containing organs to provide a protective, lubricating barrier against particles and infectious agents at mucosal surfaces. Major constituent of the colon mucus, which is mainly formed by large polymeric networks of MUC2 secreted by goblet cells that cover the exposed surfaces of intestine. MUC2 networks form hydrogels that guard the underlying epithelium from pathogens and other hazardous matter entering from the outside world, while permitting nutrient absorption and gas exchange. Acts as a divalent copper chaperone that protects intestinal cells from copper toxicity and facilitates nutritional copper unptake into cells. Binds both Cu(2+) and its reduced form, Cu(1+), at two juxtaposed binding sites: Cu(2+), once reduced to Cu(1+) by vitamin C (ascorbate) or other dietary antioxidants, transits to the other binding site. MUC2-bound Cu(1+) is protected from oxidation in aerobic environments, and can be released for nutritional delivery to cells. Mucin gels store antimicrobial molecules that participate in innate immunity. Mucin glycoproteins also house and feed the microbiome, lubricate tissue surfaces, and may facilitate the removal of contaminants and waste products from the body. Goblet cells synthesize two forms of MUC2 mucin that differ in branched chain O-glycosylation and the site of production in the colon: a (1) 'thick' mucus that wraps the microbiota to form fecal pellets is produced in the proximal, ascending colon. 'Thick' mucus transits along the descending colon and is lubricated by a (2) 'thin' MUC2 mucus produced in the distal colon which adheres to the 'thick' mucus. In Mus musculus (Mouse), this protein is Mucin-2.